The chain runs to 351 residues: Photosystem II D2 protein (351 aa).

The chain crosses the membrane as a helical span at residues 39–59 (TAYLAIGGWLTGTTFVTSWYT). A chlorophyll a-binding site is contributed by His116. A helical membrane pass occupies residues 123–139 (GFMLRQFEIARLVGIRP). Gln128 and Asn141 together coordinate pheophytin a. A helical membrane pass occupies residues 151 to 164 (VFVSVFLMYPLGQS). His196 is a chlorophyll a binding site. The helical transmembrane segment at 206-226 (GALLCAIHGATVENTLFEDGE) threads the bilayer. A plastoquinone-binding residues include His213 and Phe260. Fe cation is bound at residue His213. Residue His267 participates in Fe cation binding. Residues 277–293 (GLWTSSIGIIGLALNLR) form a helical membrane-spanning segment.

This sequence belongs to the reaction center PufL/M/PsbA/D family. PSII is composed of 1 copy each of membrane proteins PsbA, PsbB, PsbC, PsbD, PsbE, PsbF, PsbH, PsbI, PsbJ, PsbK, PsbL, PsbM, PsbT, PsbX, PsbY, PsbZ, Psb30/Ycf12, peripheral proteins PsbO, CyanoQ (PsbQ), PsbU, PsbV and a large number of cofactors. It forms dimeric complexes. The D1/D2 heterodimer binds P680, chlorophylls that are the primary electron donor of PSII, and subsequent electron acceptors. It shares a non-heme iron and each subunit binds pheophytin, quinone, additional chlorophylls, carotenoids and lipids. There is also a Cl(-1) ion associated with D1 and D2, which is required for oxygen evolution. The PSII complex binds additional chlorophylls, carotenoids and specific lipids. is required as a cofactor.

The protein localises to the cellular thylakoid membrane. The catalysed reaction is 2 a plastoquinone + 4 hnu + 2 H2O = 2 a plastoquinol + O2. In terms of biological role, photosystem II (PSII) is a light-driven water:plastoquinone oxidoreductase that uses light energy to abstract electrons from H(2)O, generating O(2) and a proton gradient subsequently used for ATP formation. It consists of a core antenna complex that captures photons, and an electron transfer chain that converts photonic excitation into a charge separation. The D1/D2 (PsbA/PsbD) reaction center heterodimer binds P680, the primary electron donor of PSII as well as several subsequent electron acceptors. D2 is needed for assembly of a stable PSII complex. The chain is Photosystem II D2 protein from Synechococcus sp. (strain WH7803).